We begin with the raw amino-acid sequence, 302 residues long: 4-diphosphocytidyl-2-C-methyl-D-erythritol kinase (302 aa).

K13 is a catalytic residue. 101 to 111 is an ATP binding site; that stretch reads PVASGIGGGSS. Residue D143 is part of the active site.

The protein belongs to the GHMP kinase family. IspE subfamily.

It catalyses the reaction 4-CDP-2-C-methyl-D-erythritol + ATP = 4-CDP-2-C-methyl-D-erythritol 2-phosphate + ADP + H(+). The protein operates within isoprenoid biosynthesis; isopentenyl diphosphate biosynthesis via DXP pathway; isopentenyl diphosphate from 1-deoxy-D-xylulose 5-phosphate: step 3/6. Its function is as follows. Catalyzes the phosphorylation of the position 2 hydroxy group of 4-diphosphocytidyl-2C-methyl-D-erythritol. This is 4-diphosphocytidyl-2-C-methyl-D-erythritol kinase from Granulibacter bethesdensis (strain ATCC BAA-1260 / CGDNIH1).